A 326-amino-acid polypeptide reads, in one-letter code: Undecaprenyl-phosphate 4-deoxy-4-formamido-L-arabinose transferase (326 aa).

2 helical membrane passes run 235–255 (MLSV…LLLI) and 270–290 (VFML…GMGL).

It belongs to the glycosyltransferase 2 family.

It localises to the cell inner membrane. It catalyses the reaction UDP-4-deoxy-4-formamido-beta-L-arabinose + di-trans,octa-cis-undecaprenyl phosphate = 4-deoxy-4-formamido-alpha-L-arabinopyranosyl di-trans,octa-cis-undecaprenyl phosphate + UDP. It functions in the pathway glycolipid biosynthesis; 4-amino-4-deoxy-alpha-L-arabinose undecaprenyl phosphate biosynthesis; 4-amino-4-deoxy-alpha-L-arabinose undecaprenyl phosphate from UDP-4-deoxy-4-formamido-beta-L-arabinose and undecaprenyl phosphate: step 1/2. Its pathway is bacterial outer membrane biogenesis; lipopolysaccharide biosynthesis. In terms of biological role, catalyzes the transfer of 4-deoxy-4-formamido-L-arabinose from UDP to undecaprenyl phosphate. The modified arabinose is attached to lipid A and is required for resistance to polymyxin and cationic antimicrobial peptides. The chain is Undecaprenyl-phosphate 4-deoxy-4-formamido-L-arabinose transferase from Sodalis glossinidius (strain morsitans).